The primary structure comprises 540 residues: Probable G-protein coupled receptor 75 (540 aa).

Residues 1 to 15 (MNSTGHLQDAPNATS) show a composition bias toward polar residues. The segment at 1 to 27 (MNSTGHLQDAPNATSLHVPHSQEGNST) is disordered. Topologically, residues 1–46 (MNSTGHLQDAPNATSLHVPHSQEGNSTSLQEGLQDLIHTATLVTCT) are extracellular. N-linked (GlcNAc...) asparagine glycosylation is found at N2, N12, and N25. Residues 47–67 (FLLAVIFCLGSYGNFIVFLSF) form a helical membrane-spanning segment. Over 68 to 86 (FDPAFRKFRTNFDFMILNL) the chain is Cytoplasmic. Residues 87-107 (SFCDLFICGVTAPMFTFVLFF) form a helical membrane-spanning segment. At 108 to 120 (SSASSIPDAFCFT) the chain is on the extracellular side. Residues 121 to 141 (FHLTSSGFIIMSLKTVAVIAL) traverse the membrane as a helical segment. Residues 142 to 160 (HRLRMVLGKQPNRTASFPC) are Cytoplasmic-facing. Residues 161–181 (TVLLTLLLWATSFTLATLATL) traverse the membrane as a helical segment. Over 182–205 (KTSKSHLCLPMSSLIAGKGKAILS) the chain is Extracellular. The helical transmembrane segment at 206 to 226 (LYVVDFTFCVAVVSVSYIMIA) threads the bilayer. Residues 227–318 (QTLRKNAQVR…INLSTAKDSK (92 aa)) lie on the Cytoplasmic side of the membrane. Residues 319–339 (AVVTCVIIVLSVLVCCLPLGI) traverse the membrane as a helical segment. The Extracellular segment spans residues 340-350 (SLVQVVLSSNG). The chain crosses the membrane as a helical span at residues 351 to 371 (SFILYQFELFGFTLIFFKSGL). Residues 372–540 (NPFIYSRNSA…SAKQIPVPSV (169 aa)) are Cytoplasmic-facing.

It belongs to the G-protein coupled receptor 1 family. As to expression, expressed at high levels in brain and spinal cord and at detectable levels in retinal pigment epithelium. In situ hybridization of adult eye sections localized transcripts only to the perivascular cells, surrounding retinal arterioles, in the ganglion cell/nerve fiber layer. Also expressed by islet cells (at protein level).

The protein resides in the cell membrane. Its function is as follows. G protein-coupled receptor that is activated by the chemokine CCL5/RANTES. Probably coupled to heterotrimeric Gq proteins, it stimulates inositol trisphosphate production and calcium mobilization upon activation. Together with CCL5/RANTES, may play a role in neuron survival through activation of a downstream signaling pathway involving the PI3, Akt and MAP kinases. CCL5/RANTES may also regulate insulin secretion by pancreatic islet cells through activation of this receptor. This chain is Probable G-protein coupled receptor 75 (GPR75), found in Homo sapiens (Human).